The following is a 111-amino-acid chain: uncharacterized protein (111 aa).

A helical transmembrane segment spans residues 81–101; that stretch reads YFFLLFYVSFPHIFLGLFFFI.

The protein resides in the membrane. This is an uncharacterized protein from Schizosaccharomyces pombe (strain 972 / ATCC 24843) (Fission yeast).